The primary structure comprises 340 residues: uncharacterized protein (340 aa).

This is an uncharacterized protein from Archaeoglobus fulgidus (strain ATCC 49558 / DSM 4304 / JCM 9628 / NBRC 100126 / VC-16).